Consider the following 366-residue polypeptide: Growth hormone secretagogue receptor type 1 (366 aa).

At 1-40 (MWNATPSEEPGFNLTLADLDWDASPGNDSLGDELLQLFPA) the chain is on the extracellular side. N-linked (GlcNAc...) asparagine glycosylation is found at Asn-13 and Asn-27. The chain crosses the membrane as a helical span at residues 41 to 66 (PLLAGVTATCVALFVVGIAGNLLTML). At 67-72 (VVSRFR) the chain is on the cytoplasmic side. Residues 73 to 96 (ELRTTTNLYLSSMAFSDLLIFLCM) form a helical membrane-spanning segment. Residues 97-117 (PLDLVRLWQYRPWNFGDLLCK) are Extracellular-facing. An intrachain disulfide couples Cys-116 to Cys-198. The helical transmembrane segment at 118 to 139 (LFQFVSESCTYATVLTITALSV) threads the bilayer. At 140–162 (ERYFAICFPLRAKVVVTKGRVKL) the chain is on the cytoplasmic side. Residues 163 to 183 (VIFVIWAVAFCSAGPIFVLVG) form a helical membrane-spanning segment. At 184–211 (VEHENGTDPWDTNECRPTEFAVRSGLLT) the chain is on the extracellular side. The chain crosses the membrane as a helical span at residues 212–235 (VMVWVSSIFFFLPVFCLTVLYSLI). Residues 236 to 263 (GRKLWRRRRGDAVVGASLRDQNHKQTVK) are Cytoplasmic-facing. Residues 264–285 (MLAVVVFAFILCWLPFHVGRYL) form a helical membrane-spanning segment. The Extracellular segment spans residues 286-302 (FSKSFEPGSLEIAQISQ). The helical transmembrane segment at 303–326 (YCNLVSFVLFYLSAAINPILYNIM) threads the bilayer. Over 327 to 366 (SKKYRVAVFRLLGFEPFSQRKLSTLKDESSRAWTESSINT) the chain is Cytoplasmic.

It belongs to the G-protein coupled receptor 1 family. Pituitary and hypothalamus.

It is found in the cell membrane. Receptor for ghrelin, coupled to G-alpha-11 proteins. Stimulates growth hormone secretion. Also binds other growth hormone releasing peptides (GHRP) (e.g. Met-enkephalin and GHRP-6) as well as non-peptide, low molecular weight secretagogues (e.g. L-692,429, MK-0677, adenosine). The polypeptide is Growth hormone secretagogue receptor type 1 (GHSR) (Homo sapiens (Human)).